The primary structure comprises 460 residues: MRIKEILNTAAINSTITAEGWVKTKRELKGFSFIEISDGSTMNGLQVIIDGNLADYEAIIKKLNTGAAVTATGLVVESPGKGQRIELQAKAVTVHGEADPETYPLQKKRHSFEFLRTIGHLRGKTNTMGAVMRVRNACATAIHQFFQERGFIWAHTPIITASDCEGAGEMFAVTNFDLANPKRTKEGAVDYAEDFFGRPAYLTVSGQLEAEVMAMAFKDVYTFGPTFRAENSNTSRHLAEFWMVEPEMAFCDIVGDQDLAEEFLRYIFKYVLEACPEDMEFFNKRIDNSVLATAQNIIENEFARITYTEAIALLEKSNKTFEFPVEWGIDLQSEHERYLAEDLFKKPLIVSNYPKDIKAFYMRLNDDQKTVAAMDVLAPKIGEIIGGSQREERLDVLERRIQEMNIEAADLWWYLDLRRFGTVPHAGFGLGFERLVQFMTGMGNIRDVIPFPRTPLNAEF.

This sequence belongs to the class-II aminoacyl-tRNA synthetase family. In terms of assembly, homodimer.

It localises to the cytoplasm. It catalyses the reaction tRNA(Asn) + L-asparagine + ATP = L-asparaginyl-tRNA(Asn) + AMP + diphosphate + H(+). In Picosynechococcus sp. (strain ATCC 27264 / PCC 7002 / PR-6) (Agmenellum quadruplicatum), this protein is Asparagine--tRNA ligase.